The primary structure comprises 348 residues: Ileal sodium/bile acid cotransporter (348 aa).

Residues 1 to 28 (MDNSSICNPNATICEGDSCIAPESNFNA) lie on the Extracellular side of the membrane. N-linked (GlcNAc...) asparagine glycans are attached at residues Asn3 and Asn10. A helical transmembrane segment spans residues 29 to 49 (ILSVVMSTVLTILLALVMFSM). Residues 50-81 (GCNVELHKFLGHLRRPWGIVVGFLCQFGIMPL) are Cytoplasmic-facing. The chain crosses the membrane as a helical span at residues 82–102 (TGFVLSVAFGILPVQAVVVLI). Topologically, residues 103 to 126 (QGCCPGGTASNILAYWVDGDMDLS) are extracellular. The helical transmembrane segment at 127-147 (VSMTTCSTLLALGMMPLCLFI) threads the bilayer. Residues 148 to 157 (YTKMWVDSGT) lie on the Cytoplasmic side of the membrane. A helical transmembrane segment spans residues 158 to 178 (IVIPYDSIGTSLVALVIPVSI). Residues 179–195 (GMYVNHKWPQKAKIILK) lie on the Extracellular side of the membrane. Residues 196–216 (IGSIAGAILIVLIAVVGGILY) traverse the membrane as a helical segment. Residues 217–224 (QSAWTIEP) lie on the Cytoplasmic side of the membrane. The helical transmembrane segment at 225–245 (KLWIIGTIYPIAGYGLGFFLA) threads the bilayer. Topologically, residues 246 to 284 (RIAGQPWYRCRTVALETGLQNTQLCSTIVQLSFSPEDLN) are extracellular. A helical transmembrane segment spans residues 285–305 (LVFTFPLIYSIFQIAFAAILL). At 306 to 348 (GAYVAYKKCHGKNNTELQEKTDNEMEPRSSFQETNKGFQPDEK) the chain is on the cytoplasmic side. A compositionally biased stretch (basic and acidic residues) spans 322–332 (LQEKTDNEMEP). The disordered stretch occupies residues 322–348 (LQEKTDNEMEPRSSFQETNKGFQPDEK). Ser335 is subject to Phosphoserine.

Belongs to the bile acid:sodium symporter (BASS) (TC 2.A.28) family. Monomer and homodimer. Mainly expressed in ileum and kidney, lower expression in jejunum.

The protein resides in the membrane. It catalyses the reaction taurocholate(out) + 2 Na(+)(out) = taurocholate(in) + 2 Na(+)(in). The catalysed reaction is cholate(out) + 2 Na(+)(out) = cholate(in) + 2 Na(+)(in). It carries out the reaction taurochenodeoxycholate(out) + 2 Na(+)(out) = taurochenodeoxycholate(in) + 2 Na(+)(in). The enzyme catalyses tauroursodeoxycholate(out) + 2 Na(+)(out) = tauroursodeoxycholate(in) + 2 Na(+)(in). It catalyses the reaction glycocholate(out) + 2 Na(+)(out) = glycocholate(in) + 2 Na(+)(in). The catalysed reaction is tauronorcholate(out) + 2 Na(+)(out) = tauronorcholate(in) + 2 Na(+)(in). It carries out the reaction tauroallocholate(out) + 2 Na(+)(out) = tauroallocholate(in) + 2 Na(+)(in). The enzyme catalyses taurodeoxycholate(out) + 2 Na(+)(out) = taurodeoxycholate(in) + 2 Na(+)(in). It catalyses the reaction tauro-beta-muricholate(out) + 2 Na(+)(out) = tauro-beta-muricholate(in) + 2 Na(+)(in). Plays a critical role in the sodium-dependent reabsorption of bile acids from the lumen of the small intestine. Transports various bile acids, unconjugated or conjugated, such as cholate and taurocholate. Also responsible for bile acid transport in the renal proximal tubules, a salvage mechanism that helps conserve bile acids. Works collaboratively with the Na(+)-taurocholate cotransporting polypeptide (NTCP), the organic solute transporter (OST), and the bile salt export pump (BSEP), to ensure efficacious biological recycling of bile acids during enterohepatic circulation. The protein is Ileal sodium/bile acid cotransporter (SLC10A2) of Cricetulus griseus (Chinese hamster).